Consider the following 209-residue polypeptide: MTTLASSIEHKTKHLAAPFENDENPWMKKYCCQCKSCKMSVPVQPWLPRFFVFGILCPVFWLVNLLAWWFLQYWQPHELEFHDLQEDEYPGFYEYEAITKRTVIPIKEEVLQEIRVMQNFSDSNSEEYYESKDGMPSSFLNVNTEQVEDENDTLKKYRYAFLKKVAHDVLESHDLLRKTFRDWNLRSLLGLLIDSILIIFVVLLCKKSR.

The Lumenal portion of the chain corresponds to 1 to 49; that stretch reads MTTLASSIEHKTKHLAAPFENDENPWMKKYCCQCKSCKMSVPVQPWLPR. The chain crosses the membrane as a helical span at residues 50–70; sequence FFVFGILCPVFWLVNLLAWWF. Over 71 to 184 the chain is Cytoplasmic; the sequence is LQYWQPHELE…LLRKTFRDWN (114 aa). Ser121, Ser123, and Ser125 each carry phosphoserine. Position 153 is a phosphothreonine (Thr153). The chain crosses the membrane as a helical span at residues 185 to 205; that stretch reads LRSLLGLLIDSILIIFVVLLC. Residues 206–209 are Lumenal-facing; it reads KKSR.

The protein localises to the endomembrane system. In terms of biological role, required for receptor inhibition of inappropriately expressed a-factor receptor (STE3) in MAT a cells. Inhibits signaling by relocalizing the G protein beta-gamma (STE4-STE18) subunit to intracellular membranes. May also be a mechanism for the down-regulation of the mating pheromone response after the zygotic fusion event, promoting the transition of the new diploid cell to vegetative growth. The sequence is that of Protein ASG7 (ASG7) from Saccharomyces cerevisiae (strain ATCC 204508 / S288c) (Baker's yeast).